The chain runs to 469 residues: ATP-dependent protease ATPase subunit HslU (469 aa).

ATP-binding positions include isoleucine 24, 66–71 (GVGKTE), aspartate 282, glutamate 347, and arginine 419.

This sequence belongs to the ClpX chaperone family. HslU subfamily. As to quaternary structure, a double ring-shaped homohexamer of HslV is capped on each side by a ring-shaped HslU homohexamer. The assembly of the HslU/HslV complex is dependent on binding of ATP.

The protein localises to the cytoplasm. ATPase subunit of a proteasome-like degradation complex; this subunit has chaperone activity. The binding of ATP and its subsequent hydrolysis by HslU are essential for unfolding of protein substrates subsequently hydrolyzed by HslV. HslU recognizes the N-terminal part of its protein substrates and unfolds these before they are guided to HslV for hydrolysis. This is ATP-dependent protease ATPase subunit HslU from Listeria monocytogenes serovar 1/2a (strain ATCC BAA-679 / EGD-e).